The sequence spans 76 residues: uncharacterized protein (76 aa).

The interval 36–41 (PDIIIT) is required for interaction with PPP3CA. Residues threonine 44 and threonine 46 each carry the phosphothreonine modification.

Interacts (via PxIxIT motif, when phosphorylated on Thr-44) with PPP3CA. Not expressed in pancreatic duct cells (at protein level). Abundantly expressed in the pancreas and weakly expressed in the thyroid. As to expression, not expressed in pancreatic duct cells (at protein level). Abundantly expressed in the lymph node and weakly expressed in the stomach, trachea and bone marrow.

This is an uncharacterized protein from Homo sapiens (Human).